The primary structure comprises 351 residues: Phosphoribosylformylglycinamidine cyclo-ligase (351 aa).

It belongs to the AIR synthase family.

The protein localises to the cytoplasm. It carries out the reaction 2-formamido-N(1)-(5-O-phospho-beta-D-ribosyl)acetamidine + ATP = 5-amino-1-(5-phospho-beta-D-ribosyl)imidazole + ADP + phosphate + H(+). It functions in the pathway purine metabolism; IMP biosynthesis via de novo pathway; 5-amino-1-(5-phospho-D-ribosyl)imidazole from N(2)-formyl-N(1)-(5-phospho-D-ribosyl)glycinamide: step 2/2. This Burkholderia multivorans (strain ATCC 17616 / 249) protein is Phosphoribosylformylglycinamidine cyclo-ligase.